The primary structure comprises 269 residues: Formamidopyrimidine-DNA glycosylase (269 aa).

The Schiff-base intermediate with DNA role is filled by Pro-2. Glu-3 serves as the catalytic Proton donor. Lys-57 functions as the Proton donor; for beta-elimination activity in the catalytic mechanism. Positions 90, 109, and 150 each coordinate DNA. An FPG-type zinc finger spans residues 235–269 (QVYGRKGEPCRVCGTPIVATKHAQRATFYCRHCQK). Residue Arg-259 is the Proton donor; for delta-elimination activity of the active site.

It belongs to the FPG family. As to quaternary structure, monomer. The cofactor is Zn(2+).

The catalysed reaction is Hydrolysis of DNA containing ring-opened 7-methylguanine residues, releasing 2,6-diamino-4-hydroxy-5-(N-methyl)formamidopyrimidine.. It catalyses the reaction 2'-deoxyribonucleotide-(2'-deoxyribose 5'-phosphate)-2'-deoxyribonucleotide-DNA = a 3'-end 2'-deoxyribonucleotide-(2,3-dehydro-2,3-deoxyribose 5'-phosphate)-DNA + a 5'-end 5'-phospho-2'-deoxyribonucleoside-DNA + H(+). Involved in base excision repair of DNA damaged by oxidation or by mutagenic agents. Acts as a DNA glycosylase that recognizes and removes damaged bases. Has a preference for oxidized purines, such as 7,8-dihydro-8-oxoguanine (8-oxoG). Has AP (apurinic/apyrimidinic) lyase activity and introduces nicks in the DNA strand. Cleaves the DNA backbone by beta-delta elimination to generate a single-strand break at the site of the removed base with both 3'- and 5'-phosphates. This is Formamidopyrimidine-DNA glycosylase from Salmonella newport (strain SL254).